Here is a 367-residue protein sequence, read N- to C-terminus: D-alanine--D-alanine ligase (367 aa).

The 208-residue stretch at 150 to 357 folds into the ATP-grasp domain; that stretch reads KKLLASAGLP…YPTLLATMVE (208 aa). 178–233 is an ATP binding site; that stretch reads RERLGLPVFVKPSRGGSSIGVSRVTAWDELPAAIELARRHDPKVIIEAAVPGRELE. 3 residues coordinate Mg(2+): Asp-312, Glu-324, and Asn-326.

The protein belongs to the D-alanine--D-alanine ligase family. It depends on Mg(2+) as a cofactor. The cofactor is Mn(2+).

It is found in the cytoplasm. The enzyme catalyses 2 D-alanine + ATP = D-alanyl-D-alanine + ADP + phosphate + H(+). It functions in the pathway cell wall biogenesis; peptidoglycan biosynthesis. In terms of biological role, cell wall formation. In Mycolicibacterium gilvum (strain PYR-GCK) (Mycobacterium gilvum (strain PYR-GCK)), this protein is D-alanine--D-alanine ligase.